We begin with the raw amino-acid sequence, 291 residues long: DNA repair protein RecO (291 aa).

The protein belongs to the RecO family.

Its function is as follows. Involved in DNA repair and RecF pathway recombination. The polypeptide is DNA repair protein RecO (Cupriavidus pinatubonensis (strain JMP 134 / LMG 1197) (Cupriavidus necator (strain JMP 134))).